The following is a 388-amino-acid chain: Protein RMD5 homolog (388 aa).

One can recognise a LisH domain in the interval 112 to 144; that stretch reads DTHIVNQIIANFFYRQGMFDIGDCFVAETGESE. Positions 150–207 constitute a CTLH domain; it reads SFVEMYRILEAMKRRDLEPALNWAVSNSDKLKEARSDLEMKLHSLHFLEIARGKNSKE. The RING-Gid-type zinc-finger motif lies at 330 to 374; sequence CPVSKEQSSDDNPPMMMSCGHVLCKQTINKMSKNGSKSSFKCPYC.

As to quaternary structure, interacts with RANBPM.

It is found in the cytoplasm. The sequence is that of Protein RMD5 homolog from Arabidopsis thaliana (Mouse-ear cress).